Here is a 170-residue protein sequence, read N- to C-terminus: Protein ripply3 (170 aa).

A WRPW motif motif is present at residues 40–43; the sequence is WRPW. Positions 79–114 are ripply homology domain; it reads HPVRLYMPKSKTSEYLQHMGKKVLANFPVQATIHFY. Residues 143 to 152 are compositionally biased toward polar residues; sequence VNSSRGSGDN. Residues 143–170 are disordered; it reads VNSSRGSGDNYSVPGGPKRNISSHTGSA.

The protein belongs to the ripply family. Interacts with tbx1 and tle4/grg4.

Its subcellular location is the nucleus. Functionally, acts as a transcriptional corepressor. Negative regulator of the transcriptional activity of tbx1 that plays a key role in pharyngeal development. Plays a role in the formation of the anteroposterior (AP) axis during embryonic development; required to establish the posterolateral border of the pre-placodal ectoderm (PPE) acting downstream of the retinoic acid receptor (RAR) signaling. This chain is Protein ripply3, found in Xenopus tropicalis (Western clawed frog).